The chain runs to 856 residues: Increased rDNA silencing protein 4 (856 aa).

Disordered stretches follow at residues 1–204 (MSAS…EPKS), 230–563 (KQEE…PTPE), and 589–672 (TSLE…DEDL). Low complexity-rich tracts occupy residues 12–42 (GPAS…ATLA), 67–84 (VPTP…RTVG), and 111–130 (SRVV…AGRT). The span at 152 to 162 (HVEERANDHAP) shows a compositional bias: basic and acidic residues. Low complexity predominate over residues 194 to 204 (ASAKPSSEPKS). Residues 239–254 (KKKKKKKPRPASKTQH) are compositionally biased toward basic residues. Composition is skewed to polar residues over residues 255 to 275 (HQTL…ENQC) and 303 to 315 (SLST…SSTG). Over residues 329 to 347 (GETRNRNGDVRDKPSREGG) the composition is skewed to basic and acidic residues. Composition is skewed to polar residues over residues 396–410 (PVSQ…TIIS), 451–468 (RVVS…QSAE), and 478–488 (RNSTSSDETFV). The segment covering 503–514 (KELERVRPRLDR) has biased composition (basic and acidic residues). A compositionally biased stretch (low complexity) spans 517–535 (TSTSSRASRVSTPASVRSP). A compositionally biased stretch (basic residues) spans 603–620 (RRGHRHHHLPHPHLRHRT). Residues 644-654 (PSRQTEHTQPA) are compositionally biased toward polar residues. One can recognise an EH domain in the interval 743–832 (DSLGQVDLSR…EGVWESAMDR (90 aa)).

It belongs to the IRS4 family.

Its function is as follows. Positive regulator of phosphatidylinositol 4,5-bisphosphate turnover and negatively regulates signaling through the cell integrity pathway. Involved in rDNA silencing. The sequence is that of Increased rDNA silencing protein 4 (irs-4) from Neurospora crassa (strain ATCC 24698 / 74-OR23-1A / CBS 708.71 / DSM 1257 / FGSC 987).